A 491-amino-acid chain; its full sequence is MSARVLMVQGCTSDAGKSTLVAALCRWLHRQGVAVAPFKPQNMALNSAVTVDGGEIGRAQAVQAQACGLPPHTDFNPVLLKPNSDTGAQVIVHGHPVATLDAVGYHAYKRTARTAVLASHARLVERFDVLLVEGAGSPAEINLREHDIANMGYAEAVDCAVILIADINRGGVFAHLVGTLALLSPSERARVAGFVINRFRGDLALLQPGLEWLERETGKPVLGVLPYLHGLQLDAEDALPRGPVHKPQARLRVVVPVLPRISNHTDLDALLAHPQVDVQLIGPGQSVPPCDLIVLPGSKSTRQDLAWLRAQGWEAAIARHLRYGGKLLGICGGLQMLGEQVHDPHGIEGAPGSSAGLGWLALQTALQPHKQLHRVGGRLLPSGAAVSGYEIHCGLSTGAALARPLLQLDDGRSDGAVSEDGQVMGTYLHGIFDHPAALAALLAWAGLADAAPLDLASLREATLERLADTVHAHLDIAALTRLTLGEPACAN.

In terms of domain architecture, GATase cobBQ-type spans 250–437 (RLRVVVPVLP…LHGIFDHPAA (188 aa)). Cys331 (nucleophile) is an active-site residue. His429 is an active-site residue.

Belongs to the CobB/CobQ family. CobQ subfamily.

It participates in cofactor biosynthesis; adenosylcobalamin biosynthesis. Functionally, catalyzes amidations at positions B, D, E, and G on adenosylcobyrinic A,C-diamide. NH(2) groups are provided by glutamine, and one molecule of ATP is hydrogenolyzed for each amidation. This Xanthomonas campestris pv. campestris (strain B100) protein is Cobyric acid synthase.